The following is a 544-amino-acid chain: 4-coumarate--CoA ligase 2 (544 aa).

The ATP site is built by Ser-190, Ser-191, Gly-192, Thr-193, Thr-194, and Lys-198. (E)-4-coumaroyl-AMP is bound at residue Tyr-240. Lys-261 contacts CoA. The interval Asp-263 to Gln-332 is SBD1. Residues Ala-310, Gln-332, Gly-333, Thr-337, and Met-345 each contribute to the (E)-4-coumaroyl-AMP site. ATP contacts are provided by Gln-332, Gly-333, and Thr-337. Residues Gly-333 to Tyr-400 are SBD2. ATP is bound by residues Asp-421 and Arg-436. (E)-4-coumaroyl-AMP is bound by residues Lys-438 and Lys-442. CoA-binding residues include Lys-444 and Gly-445. ATP is bound at residue Lys-527.

This sequence belongs to the ATP-dependent AMP-binding enzyme family. Mg(2+) serves as cofactor.

It carries out the reaction (E)-4-coumarate + ATP + CoA = (E)-4-coumaroyl-CoA + AMP + diphosphate. The enzyme catalyses (E)-4-coumarate + ATP + H(+) = (E)-4-coumaroyl-AMP + diphosphate. It catalyses the reaction (E)-4-coumaroyl-AMP + CoA = (E)-4-coumaroyl-CoA + AMP + H(+). The protein operates within phytoalexin biosynthesis; 3,4',5-trihydroxystilbene biosynthesis; 3,4',5-trihydroxystilbene from trans-4-coumarate: step 1/2. Its function is as follows. Carboxylate--CoA ligase that may use 4-coumarate as substrate. Follows a two-step reaction mechanism, wherein the carboxylate substrate first undergoes adenylation by ATP, followed by a thioesterification in the presence of CoA to yield the final CoA thioester. The polypeptide is 4-coumarate--CoA ligase 2 (4CL2) (Petroselinum crispum (Parsley)).